A 319-amino-acid polypeptide reads, in one-letter code: Probable arabinan endo-1,5-alpha-L-arabinosidase C (319 aa).

The signal sequence occupies residues 1–16 (MFVYTLIFLFLAAANA). D31 acts as the Proton acceptor in catalysis. N190 carries an N-linked (GlcNAc...) asparagine glycan. E198 (proton donor) is an active-site residue. N222 carries an N-linked (GlcNAc...) asparagine glycan.

Belongs to the glycosyl hydrolase 43 family.

The protein localises to the secreted. The enzyme catalyses Endohydrolysis of (1-&gt;5)-alpha-arabinofuranosidic linkages in (1-&gt;5)-arabinans.. It functions in the pathway glycan metabolism; L-arabinan degradation. Endo-1,5-alpha-L-arabinanase involved in degradation of pectin. Its preferred substrate is linear 1,5-alpha-L-arabinan. The protein is Probable arabinan endo-1,5-alpha-L-arabinosidase C (abnC) of Aspergillus clavatus (strain ATCC 1007 / CBS 513.65 / DSM 816 / NCTC 3887 / NRRL 1 / QM 1276 / 107).